The following is a 703-amino-acid chain: Cycloartenol synthase (703 aa).

PFTB repeat units follow at residues 59 to 103 (IKKA…QLPE) and 106 to 148 (QREI…RLLG). Residue aspartate 435 is the Proton donor of the active site. 4 PFTB repeats span residues 461 to 503 (IADG…QNIM), 539 to 579 (IARG…VASG), 587 to 628 (IVKA…VNTG), and 645 to 686 (IERG…KNIF).

It belongs to the terpene cyclase/mutase family.

It carries out the reaction (S)-2,3-epoxysqualene = cycloartenol. Functionally, converts oxidosqualene to cycloartenol (in vitro). This is Cycloartenol synthase (cas1) from Dictyostelium discoideum (Social amoeba).